The sequence spans 255 residues: HLA class II histocompatibility antigen, DQ alpha 2 chain (255 aa).

A signal peptide spans methionine 1–glycine 23. An alpha-1 region spans residues glutamate 24–asparagine 110. The Extracellular portion of the chain corresponds to glutamate 24 to glutamate 217. Asparagine 104 and asparagine 144 each carry an N-linked (GlcNAc...) asparagine glycan. An alpha-2 region spans residues glutamate 111 to tryptophan 204. Residues proline 113–glutamate 205 enclose the Ig-like C1-type domain. Cysteine 133 and cysteine 189 form a disulfide bridge. The connecting peptide stretch occupies residues glutamate 205–glutamate 217. The helical transmembrane segment at threonine 218–isoleucine 240 threads the bilayer. At glutamine 241 to leucine 255 the chain is on the cytoplasmic side.

This sequence belongs to the MHC class II family. Heterodimer of an alpha and a beta subunit; also referred as MHC class II molecule. Dimer formation with HLA-DQB2, but not with HLA-DQB1, is required for efficient exit from the endoplasmic reticulum (ER). In the ER, forms a heterononamer; 3 MHC class II molecules bind to a CD74 homotrimer (also known as invariant chain or HLA class II histocompatibility antigen gamma chain). In the endosomal/lysosomal system; CD74 undergoes sequential degradation by various proteases; leaving a small fragment termed CLIP on each MHC class II molecule. MHC class II molecule interacts with HLA_DM, and HLA_DO in B-cells, in order to release CLIP and facilitate the binding of antigenic peptides. Association with HLA-DMA also occurs in skin Langerhans cells, in post-Golgi compartments. In terms of tissue distribution, restricted to skin Langerhans cells, although some expression at low levels may occur at the surface of B lymphoblastoid cells.

The protein localises to the cell membrane. Its subcellular location is the endoplasmic reticulum membrane. It is found in the golgi apparatus. It localises to the trans-Golgi network membrane. The protein resides in the endosome membrane. The protein localises to the lysosome membrane. In terms of biological role, binds peptides derived from antigens that access the endocytic route of antigen presenting cells (APC) and presents them on the cell surface for recognition by the CD4 T-cells. The peptide binding cleft accommodates peptides of 10-30 residues. The peptides presented by MHC class II molecules are generated mostly by degradation of proteins that access the endocytic route, where they are processed by lysosomal proteases and other hydrolases. Exogenous antigens that have been endocytosed by the APC are thus readily available for presentation via MHC II molecules, and for this reason this antigen presentation pathway is usually referred to as exogenous. As membrane proteins on their way to degradation in lysosomes as part of their normal turn-over are also contained in the endosomal/lysosomal compartments, exogenous antigens must compete with those derived from endogenous components. Autophagy is also a source of endogenous peptides, autophagosomes constitutively fuse with MHC class II loading compartments. In addition to APCs, other cells of the gastrointestinal tract, such as epithelial cells, express MHC class II molecules and CD74 and act as APCs, which is an unusual trait of the GI tract. To produce a MHC class II molecule that presents an antigen, three MHC class II molecules (heterodimers of an alpha and a beta chain) associate with a CD74 trimer in the ER to form a heterononamer. Soon after the entry of this complex into the endosomal/lysosomal system where antigen processing occurs, CD74 undergoes a sequential degradation by various proteases, including CTSS and CTSL, leaving a small fragment termed CLIP (class-II-associated invariant chain peptide). The removal of CLIP is facilitated by HLA-DM via direct binding to the alpha-beta-CLIP complex so that CLIP is released. HLA-DM stabilizes MHC class II molecules until primary high affinity antigenic peptides are bound. The MHC II molecule bound to a peptide is then transported to the cell membrane surface. In B-cells, the interaction between HLA-DM and MHC class II molecules is regulated by HLA-DO. Primary dendritic cells (DCs) also to express HLA-DO. Lysosomal microenvironment has been implicated in the regulation of antigen loading into MHC II molecules, increased acidification produces increased proteolysis and efficient peptide loading. The protein is HLA class II histocompatibility antigen, DQ alpha 2 chain (HLA-DQA2) of Homo sapiens (Human).